The primary structure comprises 631 residues: Integrator complex subunit 10 (631 aa).

The span at 545–570 (FELTSSPNSSGTPTATTVAGGSQSRR) shows a compositional bias: polar residues. The disordered stretch occupies residues 545 to 577 (FELTSSPNSSGTPTATTVAGGSQSRRIGTRGAD).

This sequence belongs to the Integrator subunit 10 family. Belongs to the multiprotein complex Integrator, at least composed of IntS1, IntS2, IntS3, IntS4, omd/IntS5, IntS6, defl/IntS7, IntS8, IntS9, IntS10, IntS11, IntS12, asun/IntS13, IntS14 and IntS15. The core complex associates with protein phosphatase 2A subunits mts/PP2A and Pp2A-29B, to form the Integrator-PP2A (INTAC) complex.

Its subcellular location is the nucleus. In terms of biological role, component of the integrator complex, a multiprotein complex that terminates RNA polymerase II (Pol II) transcription in the promoter-proximal region of genes. The integrator complex provides a quality checkpoint during transcription elongation by driving premature transcription termination of transcripts that are unfavorably configured for transcriptional elongation: the complex terminates transcription by (1) catalyzing dephosphorylation of the C-terminal domain (CTD) of Pol II subunit Polr2A/Rbp1 and Spt5, and (2) degrading the exiting nascent RNA transcript via endonuclease activity. The integrator complex is also involved in the 3'-end processing of the U7 snRNA, and also the spliceosomal snRNAs U1, U2, U4 and U5. The protein is Integrator complex subunit 10 of Drosophila melanogaster (Fruit fly).